A 183-amino-acid polypeptide reads, in one-letter code: Large ribosomal subunit protein uL5 (183 aa).

The protein belongs to the universal ribosomal protein uL5 family. As to quaternary structure, part of the 50S ribosomal subunit; part of the 5S rRNA/L5/L18/L25 subcomplex. Contacts the 5S rRNA and the P site tRNA. Forms a bridge to the 30S subunit in the 70S ribosome.

This is one of the proteins that bind and probably mediate the attachment of the 5S RNA into the large ribosomal subunit, where it forms part of the central protuberance. In the 70S ribosome it contacts protein S13 of the 30S subunit (bridge B1b), connecting the 2 subunits; this bridge is implicated in subunit movement. Contacts the P site tRNA; the 5S rRNA and some of its associated proteins might help stabilize positioning of ribosome-bound tRNAs. The polypeptide is Large ribosomal subunit protein uL5 (Tropheryma whipplei (strain TW08/27) (Whipple's bacillus)).